The chain runs to 943 residues: UvrABC system protein A (943 aa).

Residue 32–39 participates in ATP binding; that stretch reads GLSGSGKS. A C4-type zinc finger spans residues 251-278; it reads CPVCGFTVPELEPRLFSFNAPFGSCSEC. ABC transporter domains are found at residues 308–589 and 609–937; these read WNPI…SKSI and GNGR…HYLK. 641–648 contacts ATP; the sequence is GVSGSGKS. The C4-type zinc-finger motif lies at 740–766; that stretch reads CEACSGDGIIKIEMHFLPDVYVACEVC.

This sequence belongs to the ABC transporter superfamily. UvrA family. Forms a heterotetramer with UvrB during the search for lesions.

It localises to the cytoplasm. Functionally, the UvrABC repair system catalyzes the recognition and processing of DNA lesions. UvrA is an ATPase and a DNA-binding protein. A damage recognition complex composed of 2 UvrA and 2 UvrB subunits scans DNA for abnormalities. When the presence of a lesion has been verified by UvrB, the UvrA molecules dissociate. The polypeptide is UvrABC system protein A (Streptococcus pneumoniae serotype 4 (strain ATCC BAA-334 / TIGR4)).